The chain runs to 228 residues: uncharacterized protein (228 aa).

5 helical membrane passes run 14–34 (HTIS…MLLA), 42–62 (VALF…AITL), 130–150 (FMFS…LVGS), 156–176 (FSFD…VLFM), and 192–212 (IAIA…LIAL).

The protein belongs to the AzlC family.

The protein localises to the cell membrane. This is an uncharacterized protein from Helicobacter pylori (strain J99 / ATCC 700824) (Campylobacter pylori J99).